A 392-amino-acid chain; its full sequence is Proteasomal ATPase-associated factor 1 (392 aa).

Ala2 carries the N-acetylalanine modification. WD repeat units follow at residues Ala82–Ala121, Glu125–Ala163, Ser167–Cys205, Ala209–Glu259, Ser270–Val308, Ala313–Gln349, and Tyr353–Leu389.

It belongs to the WD repeat PAAF1/RPN14 family. As to quaternary structure, interacts with PSMC1, PSMC2, PSMC3, PSMC4, PSMC5 and PSMC6. Interacts with SUPT6H. (Microbial infection) Interacts with HIV-1 Tat. Ubiquitously expressed, with highest levels in kidney, brain and testis.

In terms of biological role, inhibits proteasome 26S assembly and proteolytic activity by impairing the association of the 19S regulatory complex with the 20S core. In case of HIV-1 infection, recruited by viral Tat to the HIV-1 promoter, where it promotes the recruitment of 19S regulatory complex through dissociation of the proteasome 26S. This presumably promotes provirus transcription efficiency. Protects SUPT6H from proteasomal degradation. The polypeptide is Proteasomal ATPase-associated factor 1 (PAAF1) (Homo sapiens (Human)).